A 207-amino-acid chain; its full sequence is ATP-dependent Clp protease proteolytic subunit (207 aa).

The active-site Nucleophile is the Ser111. The active site involves His136.

This sequence belongs to the peptidase S14 family. In terms of assembly, fourteen ClpP subunits assemble into 2 heptameric rings which stack back to back to give a disk-like structure with a central cavity, resembling the structure of eukaryotic proteasomes.

It is found in the cytoplasm. The catalysed reaction is Hydrolysis of proteins to small peptides in the presence of ATP and magnesium. alpha-casein is the usual test substrate. In the absence of ATP, only oligopeptides shorter than five residues are hydrolyzed (such as succinyl-Leu-Tyr-|-NHMec, and Leu-Tyr-Leu-|-Tyr-Trp, in which cleavage of the -Tyr-|-Leu- and -Tyr-|-Trp bonds also occurs).. Its function is as follows. Cleaves peptides in various proteins in a process that requires ATP hydrolysis. Has a chymotrypsin-like activity. Plays a major role in the degradation of misfolded proteins. This chain is ATP-dependent Clp protease proteolytic subunit, found in Burkholderia mallei (strain ATCC 23344).